Consider the following 68-residue polypeptide: Adipokinetic prohormone type 1 (68 aa).

An N-terminal signal peptide occupies residues 1–20 (MNKIYFVIVFVACFCLFAEA). Gln-21 is subject to Pyrrolidone carboxylic acid. Position 30 is a glycine amide (Gly-30). Positions 34–68 (SGVAPMSCKNEEAVATIFKLIQNEAERFIICQQKS) are excised as a propeptide.

As to expression, expressed in antennal lobe (AL), corpora cardiaca (CC), corpora allata (CA) and gnathal ganglion (GNG) (at protein level). Expression in CC and CA detected in all animals, expression in GNG in some animals and in AL in few animals (at protein level).

It is found in the secreted. In terms of biological role, this hormone, released from cells in the corpora cardiaca, causes release of diglycerides from the fat body and stimulation of muscles to use these diglycerides as an energy source during energy-demanding processes. This is Adipokinetic prohormone type 1 from Agrotis ipsilon (Black cutworm moth).